A 1047-amino-acid chain; its full sequence is Ubiquitin carboxyl-terminal hydrolase 28 (1047 aa).

Disordered regions lie at residues 60 to 95 (DQEP…DPEK) and 110 to 138 (SPKA…RCEV). The region spanning 94 to 113 (EKKGDVHSAVAYGQLESPKA) is the UIM domain. Positions 111–128 (PKAHAAERPQEVHSPEHK) are enriched in basic and acidic residues. One can recognise a USP domain in the interval 156–651 (VGMKNIGNTC…SAYCLMYISD (496 aa)). The active-site Nucleophile is cysteine 165. Polar residues predominate over residues 461 to 486 (STEDSQMMDRQSQGESLILGTPSQPD). Residues 461–528 (STEDSQMMDR…SEPPAEMSDC (68 aa)) are disordered. Residues 489 to 498 (LDGKDGKPED) are compositionally biased toward basic and acidic residues. Polar residues predominate over residues 504–516 (ANSSPQQQLNAPL). The active-site Proton acceptor is histidine 601. The interval 694-735 (EAEEWEEEQSCKIPSTASESQELSPESGLDPPAAHEQSLRSL) is disordered. A compositionally biased stretch (polar residues) spans 705–717 (KIPSTASESQELS).

This sequence belongs to the peptidase C19 family. USP28 subfamily.

It is found in the nucleus. It localises to the nucleoplasm. It catalyses the reaction Thiol-dependent hydrolysis of ester, thioester, amide, peptide and isopeptide bonds formed by the C-terminal Gly of ubiquitin (a 76-residue protein attached to proteins as an intracellular targeting signal).. Functionally, deubiquitinase involved in DNA damage response checkpoint and MYC proto-oncogene stability. Involved in DNA damage induced apoptosis by specifically deubiquitinating proteins of the DNA damage pathway such as CLSPN. Also involved in G2 DNA damage checkpoint, by deubiquitinating CLSPN, and preventing its degradation by the anaphase promoting complex/cyclosome (APC/C). Specifically deubiquitinates MYC in the nucleoplasm, leading to prevent MYC degradation by the proteasome. Deubiquitinates ZNF304, hence may prevent ZNF304 degradation by the proteasome, leading to the activated KRAS-mediated promoter hypermethylation and transcriptional silencing of tumor suppressor genes (TSGs). The protein is Ubiquitin carboxyl-terminal hydrolase 28 (USP28) of Gallus gallus (Chicken).